A 257-amino-acid polypeptide reads, in one-letter code: MVALRLIPCLDVANGRVVKGVNFVGLRDAGDPVELACRYSREGADELVFLDIAASHEARATLVEIVRRTAESVTIPFTVGGGISSIEGITELLRAGADKISLNSSAVKDPGLVSRGACQFGSQCIVVAIDAKRRLEESSGWDVFVNGGRKNTGLDALSWARKVVELGAGEILLTSMDGDGTQKGYDLELTKTISQSVQVPVIASGGAGCLEDVFEAFEYGNASAALLASLLHDQDLTIEEIKNYLLKKNLIIRPTNY.

Catalysis depends on residues aspartate 11 and aspartate 130.

The protein belongs to the HisA/HisF family. As to quaternary structure, heterodimer of HisH and HisF.

It localises to the cytoplasm. It catalyses the reaction 5-[(5-phospho-1-deoxy-D-ribulos-1-ylimino)methylamino]-1-(5-phospho-beta-D-ribosyl)imidazole-4-carboxamide + L-glutamine = D-erythro-1-(imidazol-4-yl)glycerol 3-phosphate + 5-amino-1-(5-phospho-beta-D-ribosyl)imidazole-4-carboxamide + L-glutamate + H(+). The protein operates within amino-acid biosynthesis; L-histidine biosynthesis; L-histidine from 5-phospho-alpha-D-ribose 1-diphosphate: step 5/9. In terms of biological role, IGPS catalyzes the conversion of PRFAR and glutamine to IGP, AICAR and glutamate. The HisF subunit catalyzes the cyclization activity that produces IGP and AICAR from PRFAR using the ammonia provided by the HisH subunit. This chain is Imidazole glycerol phosphate synthase subunit HisF, found in Prochlorococcus marinus (strain SARG / CCMP1375 / SS120).